Here is a 176-residue protein sequence, read N- to C-terminus: Protein singles bar (176 aa).

The next 4 helical transmembrane spans lie at 13–35 (LGIRICCCRVCTCINFGFVLSRI), 71–91 (FLATTGHCFTTTGILLLCYAF), 111–131 (LASCMYFSSSSYMGFACVVWL), and 140–160 (GFWAYPAMTACYYMGYAAGIL). The region spanning 30 to 173 (FVLSRIGLLK…DAYLAFRHFR (144 aa)) is the MARVEL domain.

It localises to the membrane. Its function is as follows. Essential for myoblast fusion in developing embryos and pupae, and consequently is essential for muscle formation in adults. Required for progression past the pre-fusion complex stage of myoblast fusion. The polypeptide is Protein singles bar (Drosophila melanogaster (Fruit fly)).